Reading from the N-terminus, the 198-residue chain is MAENDDAVLTAAVGYVYVAEAGTAAPTPAELKTIDLSDPSTWTGATGWSSVGHTSRGTLPEFGFEGGDSEVKGSWQKKKLREITTEDPIDYVVVLLHQFDEQSLGLYYGPNASTTPGVFGVKTGQTNEKAVLVVIEDGDMRLGHHAHKAGVRRDDAIELPIDDLAALPVRFTYLDHEDELPFSWINEDLFGLSPGGGA.

It localises to the virion. This Mycobacterium (Mycobacteriophage D29) protein is Major tail protein Gp23 (23).